A 201-amino-acid chain; its full sequence is Holliday junction branch migration complex subunit RuvA (201 aa).

Positions 1 to 63 (MIAFVSGTVA…EDSLTLYGFA (63 aa)) are domain I. The tract at residues 64 to 139 (DDDERQVFEL…RLGEPIGAPA (76 aa)) is domain II. Residues 139-143 (AVGAP) form a flexible linker region. The segment at 144-201 (VSTGWRDQLHAALIGLGYATREADEAVSAVAPQAEAAGGTPQVGALLKAALQTLNRAR) is domain III.

It belongs to the RuvA family. In terms of assembly, homotetramer. Forms an RuvA(8)-RuvB(12)-Holliday junction (HJ) complex. HJ DNA is sandwiched between 2 RuvA tetramers; dsDNA enters through RuvA and exits via RuvB. An RuvB hexamer assembles on each DNA strand where it exits the tetramer. Each RuvB hexamer is contacted by two RuvA subunits (via domain III) on 2 adjacent RuvB subunits; this complex drives branch migration. In the full resolvosome a probable DNA-RuvA(4)-RuvB(12)-RuvC(2) complex forms which resolves the HJ.

Its subcellular location is the cytoplasm. The RuvA-RuvB-RuvC complex processes Holliday junction (HJ) DNA during genetic recombination and DNA repair, while the RuvA-RuvB complex plays an important role in the rescue of blocked DNA replication forks via replication fork reversal (RFR). RuvA specifically binds to HJ cruciform DNA, conferring on it an open structure. The RuvB hexamer acts as an ATP-dependent pump, pulling dsDNA into and through the RuvAB complex. HJ branch migration allows RuvC to scan DNA until it finds its consensus sequence, where it cleaves and resolves the cruciform DNA. The polypeptide is Holliday junction branch migration complex subunit RuvA (Streptomyces coelicolor (strain ATCC BAA-471 / A3(2) / M145)).